The primary structure comprises 579 residues: Nuclear receptor coactivator 5 (579 aa).

N-acetylmethionine is present on Met-1. A disordered region spans residues 1–77 (MNTAPSRPSP…DIRDHRDSRS (77 aa)). Positions 1–158 (MNTAPSRPSP…RDSFDGRGPP (158 aa)) are transcription repression. Thr-3 carries the post-translational modification Phosphothreonine. Ser-9, Ser-21, Ser-29, Ser-34, Ser-96, Ser-116, Ser-126, Ser-143, and Ser-151 each carry phosphoserine. Basic and acidic residues predominate over residues 11-77 (TRRDPYSFGD…DIRDHRDSRS (67 aa)). The segment at 148–172 (YRDSFDGRGPPGPESQSRAKERLKR) is disordered. Phosphothreonine is present on Thr-274. The LXXLL motif signature appears at 345 to 349 (LINLL). Ser-378 and Ser-381 each carry phosphoserine. Disordered regions lie at residues 378–428 (SADS…PTSQ) and 446–529 (ANSS…RPVS). 2 stretches are compositionally biased toward low complexity: residues 395–420 (SGSS…ATPT) and 446–460 (ANSS…TGSS). Residues 458–579 (GSSQNQNFST…APMGSYQRHY (122 aa)) form a transcription activation region. A compositionally biased stretch (polar residues) spans 461–485 (QNQNFSTAANSQPQQRPQASGNQPP).

Binds HTATIP2/TIP30. Interacts with YLPM1. Forms a complex with ILF2, ILF3, YLPM1, KHDRBS1, RBMX and PPP1CA.

The protein resides in the nucleus. Nuclear receptor coregulator that can have both coactivator and corepressor functions. Interacts with nuclear receptors for steroids (ESR1 and ESR2) independently of the steroid binding domain (AF-2) of the ESR receptors, and with the orphan nuclear receptor NR1D2. Involved in the coactivation of nuclear steroid receptors (ER) as well as the corepression of MYC in response to 17-beta-estradiol (E2). The sequence is that of Nuclear receptor coactivator 5 (Ncoa5) from Mus musculus (Mouse).